The chain runs to 564 residues: ATP-dependent RNA helicase ROK1 (564 aa).

Disordered regions lie at residues 1-45 and 62-87; these read MDIF…ESQI and EDDR…DGLI. 3 stretches are compositionally biased toward basic and acidic residues: residues 13-23, 33-45, and 62-86; these read VKKESGPKAKA, DENH…ESQI, and EDDR…DDGL. The Q motif motif lies at 122-150; sequence DLISRFSFDKRLLNNLIENGFTEPTPIQC. The Helicase ATP-binding domain occupies 153–333; it reads IPVALNNRDV…QSIMMDPVRV (181 aa). 166 to 173 contacts ATP; sequence GPTGSGKT. The DEAD box motif lies at 280–283; that stretch reads DEAD. Positions 344–506 constitute a Helicase C-terminal domain; the sequence is NIEQKLIFCG…EVSEWMDKMA (163 aa). Residues 512 to 564 are disordered; it reads EKESIKNGKAHKERKQITTVPKMDKAKRRRQQEMIAASKRRKNEELSKKHFSK. Positions 553–564 are enriched in basic and acidic residues; the sequence is KNEELSKKHFSK.

This sequence belongs to the DEAD box helicase family. DDX52/ROK1 subfamily. Interacts with the U3 snoRNA and is associated with the 90S and 40S pre-ribosomes. This association requires the presence of RRP5. Also interacts with OSH3.

Its subcellular location is the nucleus. It is found in the nucleolus. It carries out the reaction ATP + H2O = ADP + phosphate + H(+). Its function is as follows. ATP-dependent RNA helicase involved in 40S ribosomal subunit biogenesis. Required for the processing and cleavage of 35S pre-rRNA at sites A0, A1, and A2, leading to mature 18S rRNA. May also have a gene-specific regulatory function since it affects nuclear fusion by regulating KAR4 expression and contributes with KEM1 to ISP-1 sensitivity. This chain is ATP-dependent RNA helicase ROK1 (ROK1), found in Saccharomyces cerevisiae (strain ATCC 204508 / S288c) (Baker's yeast).